The chain runs to 156 residues: Ribosomal RNA large subunit methyltransferase H (156 aa).

Residues L73, G104, and 123–128 each bind S-adenosyl-L-methionine; that span reads LSALTL.

The protein belongs to the RNA methyltransferase RlmH family. In terms of assembly, homodimer.

It is found in the cytoplasm. It carries out the reaction pseudouridine(1915) in 23S rRNA + S-adenosyl-L-methionine = N(3)-methylpseudouridine(1915) in 23S rRNA + S-adenosyl-L-homocysteine + H(+). Its function is as follows. Specifically methylates the pseudouridine at position 1915 (m3Psi1915) in 23S rRNA. The chain is Ribosomal RNA large subunit methyltransferase H from Erwinia tasmaniensis (strain DSM 17950 / CFBP 7177 / CIP 109463 / NCPPB 4357 / Et1/99).